Consider the following 179-residue polypeptide: Large ribosomal subunit protein uL5 (179 aa).

The protein belongs to the universal ribosomal protein uL5 family. As to quaternary structure, part of the 50S ribosomal subunit; part of the 5S rRNA/L5/L18/L25 subcomplex. Contacts the 5S rRNA and the P site tRNA. Forms a bridge to the 30S subunit in the 70S ribosome.

In terms of biological role, this is one of the proteins that bind and probably mediate the attachment of the 5S RNA into the large ribosomal subunit, where it forms part of the central protuberance. In the 70S ribosome it contacts protein S13 of the 30S subunit (bridge B1b), connecting the 2 subunits; this bridge is implicated in subunit movement. Contacts the P site tRNA; the 5S rRNA and some of its associated proteins might help stabilize positioning of ribosome-bound tRNAs. The protein is Large ribosomal subunit protein uL5 of Burkholderia mallei (strain NCTC 10247).